Here is a 355-residue protein sequence, read N- to C-terminus: MEVNVWNMTDLWTWFEDEFANATGMPPVEKDYSPCLVVTQTLNKYVVVVIYALVFLLSLLGNSLVMLVILYSRSNRSVTDVYLLNLAMADLLFALTMPIWAVSKEKGWIFGTPLCKVVSLVKEVNFYSGILLLACISVDRYLAIVHATRTLTQKRHLVKFICLGIWALSLILSLPFFLFRQVFSPNNSSPVCYEDLGHNTAKWRMVLRILPHTFGFILPLLVMLFCYGFTLRTLFQAHMGQKHRAMRVIFAVVLIFLLCWLPYNLVLLADTLMRTHVIQETCQRRNDIDRALDATEILGFLHSCLNPIIYAFIGQNFRNGFLKMLAARGLISKEFLTRHRVTSYTSSSTNVPSNL.

Over 1 to 40 (MEVNVWNMTDLWTWFEDEFANATGMPPVEKDYSPCLVVTQ) the chain is Extracellular. Residues asparagine 7 and asparagine 21 are each glycosylated (N-linked (GlcNAc...) asparagine). Residues 41 to 67 (TLNKYVVVVIYALVFLLSLLGNSLVML) traverse the membrane as a helical segment. The Cytoplasmic segment spans residues 68–73 (VILYSR). A helical transmembrane segment spans residues 74–92 (SNRSVTDVYLLNLAMADLL). Topologically, residues 93 to 114 (FALTMPIWAVSKEKGWIFGTPL) are extracellular. A helical transmembrane segment spans residues 115–138 (CKVVSLVKEVNFYSGILLLACISV). Cysteine 115 and cysteine 192 are joined by a disulfide. Residues 139–159 (DRYLAIVHATRTLTQKRHLVK) lie on the Cytoplasmic side of the membrane. A helical membrane pass occupies residues 160 to 184 (FICLGIWALSLILSLPFFLFRQVFS). Residues 185 to 204 (PNNSSPVCYEDLGHNTAKWR) are Extracellular-facing. Residues 205 to 232 (MVLRILPHTFGFILPLLVMLFCYGFTLR) traverse the membrane as a helical segment. Residues 233–247 (TLFQAHMGQKHRAMR) lie on the Cytoplasmic side of the membrane. The helical transmembrane segment at 248 to 270 (VIFAVVLIFLLCWLPYNLVLLAD) threads the bilayer. Over 271 to 290 (TLMRTHVIQETCQRRNDIDR) the chain is Extracellular. A helical transmembrane segment spans residues 291-313 (ALDATEILGFLHSCLNPIIYAFI). Over 314–355 (GQNFRNGFLKMLAARGLISKEFLTRHRVTSYTSSSTNVPSNL) the chain is Cytoplasmic.

Belongs to the G-protein coupled receptor 1 family. In terms of assembly, interacts with IL8. Interacts with GNAI2. Neutrophils.

The protein localises to the cell membrane. Functionally, receptor to interleukin-8, which is a powerful neutrophils chemotactic factor. Binding of IL-8 to the receptor causes activation of neutrophils. This response is mediated via a G-protein that activates a phosphatidylinositol-calcium second messenger system. The chain is C-X-C chemokine receptor type 1 (CXCR1) from Oryctolagus cuniculus (Rabbit).